The primary structure comprises 469 residues: Probable ribonuclease FAU-1 (469 aa).

Belongs to the FAU-1 family.

Functionally, probable RNase involved in rRNA stability through maturation and/or degradation of precursor rRNAs. Binds to RNA in loop regions with AU-rich sequences. This Pyrococcus horikoshii (strain ATCC 700860 / DSM 12428 / JCM 9974 / NBRC 100139 / OT-3) protein is Probable ribonuclease FAU-1.